Here is a 581-residue protein sequence, read N- to C-terminus: Arginine--tRNA ligase (581 aa).

The 'HIGH' region signature appears at 126–136 (PNLAKEMHVGH).

This sequence belongs to the class-I aminoacyl-tRNA synthetase family. In terms of assembly, monomer.

It is found in the cytoplasm. The catalysed reaction is tRNA(Arg) + L-arginine + ATP = L-arginyl-tRNA(Arg) + AMP + diphosphate. This Shewanella baltica (strain OS155 / ATCC BAA-1091) protein is Arginine--tRNA ligase.